Consider the following 159-residue polypeptide: Ribosomal RNA large subunit methyltransferase H (159 aa).

Residues L76, G108, and 127–132 (FSKMTF) each bind S-adenosyl-L-methionine.

Belongs to the RNA methyltransferase RlmH family. Homodimer.

It localises to the cytoplasm. It carries out the reaction pseudouridine(1915) in 23S rRNA + S-adenosyl-L-methionine = N(3)-methylpseudouridine(1915) in 23S rRNA + S-adenosyl-L-homocysteine + H(+). In terms of biological role, specifically methylates the pseudouridine at position 1915 (m3Psi1915) in 23S rRNA. This Shouchella clausii (strain KSM-K16) (Alkalihalobacillus clausii) protein is Ribosomal RNA large subunit methyltransferase H.